A 59-amino-acid polypeptide reads, in one-letter code: ATP synthase protein 8 (59 aa).

A helical membrane pass occupies residues 7 to 23; that stretch reads LSPPFLYFELIGHFQVE.

The protein belongs to the ATPase protein 8 family. F-type ATPases have 2 components, CF(1) - the catalytic core - and CF(0) - the membrane proton channel.

It localises to the mitochondrion membrane. Functionally, mitochondrial membrane ATP synthase (F(1)F(0) ATP synthase or Complex V) produces ATP from ADP in the presence of a proton gradient across the membrane which is generated by electron transport complexes of the respiratory chain. F-type ATPases consist of two structural domains, F(1) - containing the extramembraneous catalytic core and F(0) - containing the membrane proton channel, linked together by a central stalk and a peripheral stalk. During catalysis, ATP synthesis in the catalytic domain of F(1) is coupled via a rotary mechanism of the central stalk subunits to proton translocation. Part of the complex F(0) domain. Minor subunit located with subunit a in the membrane. The chain is ATP synthase protein 8 (MT-ATP8) from Oenothera berteroana (Bertero's evening primrose).